The following is a 2276-amino-acid chain: Poly [ADP-ribose] polymerase tankyrase (2276 aa).

2 stretches are compositionally biased toward basic residues: residues 1-15 and 87-98; these read MARRVNKKKSPVKAA and KAVKAPKVKAPS. 2 disordered regions span residues 1–20 and 79–103; these read MARRVNKKKSPVKAARKIDG and SSKTGQKVKAVKAPKVKAPSKKGND. ANK repeat units follow at residues 345-374, 378-407, 411-440, 461-490, 498-527, 531-560, 564-593, 598-627, 675-725, 729-758, 970-999, 1171-1200, 1204-1233, 1472-1501, and 1505-1535; these read KNITPLHTAAISNSTHMLEAMRAVYPTINI, DNWYTMHYAACAPGTAPMEFLLKNGGSVTM, QTETPLHVAARAGRAVNCTFLMKEMLDLEK, SGNSALHLAVLRNNLDVVDALLAEPTIVVD, NRLTPLMMACGKGYLEMAKKLVEKGALVEG, KKRTPLIHAMLNGQIHTAAFLLAKGASLTL, SGNTAAHYAAAYGFLDCLKLLASIDDNILS, WQLYPLSVAYLKGHYGIVTWLLEGPHKDKA, SGQT…KVDV, EDNTPLHYALTNGNLMLFNLMLDKVANKRN, KDDVLIVQAIMFDKPNVVELILDTASEMHL, NGNTILHLAAIKNSTICLMTLIRKKCHVDL, DGNTPLALAVHHGRQSSALTLIQANADVTE, GLIPPISFAVLQENPNMIRALRNAGASLKT, and YGRTPLMYAIMTNNRSVVDAIVGDGKLAVVL. The disordered stretch occupies residues 1570–1649; the sequence is VPARVESDEE…STGPKRKKLV (80 aa). Acidic residues-rich tracts occupy residues 1576–1590 and 1612–1622; these read SDEEEEDNSGSESGE and SDDEDDDDDDS. The stretch at 1662–1706 is one ANK 16 repeat; sequence KENNPLHYFIEPLAWENVELLGDLAAANKTAIVQCLIDKRSPNPI. The WGR domain maps to 1788–1889; sequence GLVSFCDETQ…ANFRDMPKKY (102 aa). The PARP alpha-helical domain maps to 1910 to 2045; that stretch reads KNTEKDPIRR…EIETATRLLC (136 aa). The PARP catalytic domain maps to 2047–2276; the sequence is AEFRQDLDRV…VLPKYIVMYK (230 aa).

As to expression, expressed throughout the head and tail, in germ cells and somatic cells.

It localises to the nucleus. The protein resides in the chromosome. It carries out the reaction NAD(+) + (ADP-D-ribosyl)n-acceptor = nicotinamide + (ADP-D-ribosyl)n+1-acceptor + H(+).. The enzyme catalyses L-aspartyl-[protein] + NAD(+) = 4-O-(ADP-D-ribosyl)-L-aspartyl-[protein] + nicotinamide. The catalysed reaction is L-glutamyl-[protein] + NAD(+) = 5-O-(ADP-D-ribosyl)-L-glutamyl-[protein] + nicotinamide. Poly[ADP-ribose] polymerases modify various nuclear proteins by poly(ADP-ribosyl)ation, a post-translational modification synthesized after DNA damage that appears as an obligatory step in a detection/signaling pathway leading to the reparation of DNA strand breaks and programmed cell death. The sequence is that of Poly [ADP-ribose] polymerase tankyrase from Caenorhabditis elegans.